Reading from the N-terminus, the 436-residue chain is Trigger factor (436 aa).

Residues 161–246 enclose the PPIase FKBP-type domain; sequence GMRVTMDFVG…LNKVEEQILP (86 aa).

This sequence belongs to the FKBP-type PPIase family. Tig subfamily.

It is found in the cytoplasm. The catalysed reaction is [protein]-peptidylproline (omega=180) = [protein]-peptidylproline (omega=0). In terms of biological role, involved in protein export. Acts as a chaperone by maintaining the newly synthesized protein in an open conformation. Functions as a peptidyl-prolyl cis-trans isomerase. This is Trigger factor from Aeromonas hydrophila subsp. hydrophila (strain ATCC 7966 / DSM 30187 / BCRC 13018 / CCUG 14551 / JCM 1027 / KCTC 2358 / NCIMB 9240 / NCTC 8049).